The primary structure comprises 225 residues: ATP-dependent dethiobiotin synthetase BioD 1 (225 aa).

Positions 13 and 17 each coordinate Mg(2+). 13–18 contacts ATP; the sequence is EVGKTV. Residue K38 is part of the active site. S42 contributes to the substrate binding site. 2 residues coordinate Mg(2+): D55 and E116. ATP-binding positions include D55, 116–119, and 176–177; these read EGAG and ND. Position 188 (Y188) interacts with substrate. Residues 205–207 and E212 each bind ATP; that span reads PWL.

The protein belongs to the dethiobiotin synthetase family. In terms of assembly, homodimer. Mg(2+) is required as a cofactor.

It is found in the cytoplasm. It carries out the reaction (7R,8S)-7,8-diammoniononanoate + CO2 + ATP = (4R,5S)-dethiobiotin + ADP + phosphate + 3 H(+). Its pathway is cofactor biosynthesis; biotin biosynthesis; biotin from 7,8-diaminononanoate: step 1/2. Its function is as follows. Catalyzes a mechanistically unusual reaction, the ATP-dependent insertion of CO2 between the N7 and N8 nitrogen atoms of 7,8-diaminopelargonic acid (DAPA, also called 7,8-diammoniononanoate) to form a ureido ring. Only CTP can partially replace ATP while diaminobiotin is only 37% as effective as 7,8-diaminopelargonic acid. In another study both CTP and GTP (but not ITP, TTP or UTP) can partially replace ATP. The polypeptide is ATP-dependent dethiobiotin synthetase BioD 1 (Escherichia coli (strain K12)).